We begin with the raw amino-acid sequence, 435 residues long: Elongation factor 1-alpha (435 aa).

Residues 6–231 form the tr-type G domain; it reads KVHINLVVIG…DALEPPKRPV (226 aa). Residues 15–22 form a G1 region; it reads GHVDSGKS. 15–22 is a GTP binding site; the sequence is GHVDSGKS. The interval 71–75 is G2; sequence GITID. Positions 92–95 are G3; sequence DAPG. GTP contacts are provided by residues 92-96 and 154-157; these read DAPGH and NKMD. The interval 154 to 157 is G4; it reads NKMD. Residues 195–197 are G5; that stretch reads SGF.

The protein belongs to the TRAFAC class translation factor GTPase superfamily. Classic translation factor GTPase family. EF-Tu/EF-1A subfamily.

The protein resides in the cytoplasm. In terms of biological role, this protein promotes the GTP-dependent binding of aminoacyl-tRNA to the A-site of ribosomes during protein biosynthesis. The sequence is that of Elongation factor 1-alpha from Tetrahymena pyriformis.